A 227-amino-acid polypeptide reads, in one-letter code: Guanylate kinase (227 aa).

In terms of domain architecture, Guanylate kinase-like spans 21–199 (GNLFMVVAPS…ALAELECIVA (179 aa)). 28-35 (APSGAGKS) serves as a coordination point for ATP.

It belongs to the guanylate kinase family.

Its subcellular location is the cytoplasm. It carries out the reaction GMP + ATP = GDP + ADP. Essential for recycling GMP and indirectly, cGMP. In Burkholderia orbicola (strain AU 1054), this protein is Guanylate kinase.